Consider the following 273-residue polypeptide: MSGLYTETREVLRKYGVRLRRSLGQNYLIDEVKRQRILEYADLREDDRVLEIGPGIGTLTLPMAELAGHVTAIESDPLIAAILMDRLQVDNVDVIVGDALRVDFPEFNKVVSNLPYQISSPITFRLLEHDFELAVLMYQKEFARRMVAEPGTREYSRLSVMVHFLAEVEIVDYLKPGCFFPRPRVESAVVTLKPTGFRAPAFLEDVCRALFQHRKKKTSKSLRESFHEIRTDLSFNEVLRGLPPEILEKRVFQLRPEDILEIAEHIEDLSGSS.

The S-adenosyl-L-methionine site is built by Asn-26, Leu-28, Gly-53, Glu-74, Asp-98, and Asn-113.

This sequence belongs to the class I-like SAM-binding methyltransferase superfamily. rRNA adenine N(6)-methyltransferase family. RsmA subfamily.

It localises to the cytoplasm. Functionally, specifically dimethylates two adjacent adenosines in the loop of a conserved hairpin near the 3'-end of 16S rRNA in the 30S particle. May play a critical role in biogenesis of 30S subunits. This Methanothermobacter thermautotrophicus (strain ATCC 29096 / DSM 1053 / JCM 10044 / NBRC 100330 / Delta H) (Methanobacterium thermoautotrophicum) protein is Probable ribosomal RNA small subunit methyltransferase A.